We begin with the raw amino-acid sequence, 399 residues long: Beta-1,6-galactosyltransferase GALT31A (399 aa).

The Cytoplasmic portion of the chain corresponds to 1 to 12; it reads MGMGRYQKSATS. Residues 13–35 form a helical; Signal-anchor for type II membrane protein membrane-spanning segment; the sequence is GVSARWVFVLCISSFLLGVLVVN. At 36–399 the chain is on the lumenal side; that stretch reads RLLASFETVD…GDGAIWHSSF (364 aa).

Belongs to the glycosyltransferase 31 family. As to quaternary structure, interacts with GALT29A. Mn(2+) is required as a cofactor.

Its subcellular location is the golgi apparatus membrane. It participates in protein modification; protein glycosylation. Its function is as follows. Beta-galactosyltransferase involved in elongation of beta-1,6-linked galactan side chains on arabinogalactan proteins. Required for the progression of embryogenesis beyond the globular stage. Beta-galactosyltransferase involved in the biosynthesis of type II arabinogalactan. Transfers galactose from UDP-galactose to a mixture of various oligosaccharides derived from arabinogalactan proteins. Forms a complex with GALT29A that can work cooperatively to enhance the activities of adding galactose residues at O6 positions to beta-1,6-linked galactan and beta-1,3-linked galactan. This chain is Beta-1,6-galactosyltransferase GALT31A, found in Arabidopsis thaliana (Mouse-ear cress).